A 323-amino-acid chain; its full sequence is Beta-ketoacyl-[acyl-carrier-protein] synthase III (323 aa).

Catalysis depends on residues C114 and H250. Residues 251-255 are ACP-binding; that stretch reads QANIR. Residue N280 is part of the active site.

Belongs to the thiolase-like superfamily. FabH family. In terms of assembly, homodimer.

It is found in the cytoplasm. The catalysed reaction is malonyl-[ACP] + acetyl-CoA + H(+) = 3-oxobutanoyl-[ACP] + CO2 + CoA. The protein operates within lipid metabolism; fatty acid biosynthesis. Functionally, catalyzes the condensation reaction of fatty acid synthesis by the addition to an acyl acceptor of two carbons from malonyl-ACP. Catalyzes the first condensation reaction which initiates fatty acid synthesis and may therefore play a role in governing the total rate of fatty acid production. Possesses both acetoacetyl-ACP synthase and acetyl transacylase activities. Its substrate specificity determines the biosynthesis of branched-chain and/or straight-chain of fatty acids. This Ruegeria pomeroyi (strain ATCC 700808 / DSM 15171 / DSS-3) (Silicibacter pomeroyi) protein is Beta-ketoacyl-[acyl-carrier-protein] synthase III.